Here is a 42-residue protein sequence, read N- to C-terminus: Large ribosomal subunit protein bL36 (42 aa).

This sequence belongs to the bacterial ribosomal protein bL36 family.

The sequence is that of Large ribosomal subunit protein bL36 from Wolbachia pipientis wMel.